Here is a 422-residue protein sequence, read N- to C-terminus: NADP-dependent malic enzyme (422 aa).

Catalysis depends on tyrosine 39, which acts as the Proton donor. The active-site Proton acceptor is lysine 94. Substrate is bound at residue lysine 94. The a divalent metal cation site is built by glutamate 136, aspartate 137, and aspartate 162. Residues 195 to 198 (AGAA), asparagine 286, and asparagine 318 contribute to the NADP(+) site. Substrate is bound at residue asparagine 318.

It belongs to the malic enzymes family. It depends on Mg(2+) as a cofactor. Mn(2+) is required as a cofactor.

It catalyses the reaction (S)-malate + NADP(+) = pyruvate + CO2 + NADPH. It carries out the reaction oxaloacetate + H(+) = pyruvate + CO2. The protein is NADP-dependent malic enzyme of Halomonas elongata (strain ATCC 33173 / DSM 2581 / NBRC 15536 / NCIMB 2198 / 1H9).